Here is a 318-residue protein sequence, read N- to C-terminus: NADH-ubiquinone oxidoreductase chain 1 (318 aa).

8 helical membrane-spanning segments follow: residues 3 to 23 (TTNILCLIIPILLAVAFLTLV), 69 to 89 (FMFTIAPTLALTLALTLWIPL), 100 to 120 (LGILFILAVSSLAVYSILWSG), 135 to 155 (AVAQTISYEVTLAIILLSLVL), 171 to 191 (HMWLVLPTWPLTMMWFTSTLA), 213 to 233 (VEYAAGPFALFFMAEYANIIL), 253 to 273 (ELHTINFITKTLILTTMFLWI), and 294 to 314 (LPLTLAMCMWHVSTSISFASI).

The protein belongs to the complex I subunit 1 family.

The protein resides in the mitochondrion inner membrane. The enzyme catalyses a ubiquinone + NADH + 5 H(+)(in) = a ubiquinol + NAD(+) + 4 H(+)(out). Core subunit of the mitochondrial membrane respiratory chain NADH dehydrogenase (Complex I) that is believed to belong to the minimal assembly required for catalysis. Complex I functions in the transfer of electrons from NADH to the respiratory chain. The immediate electron acceptor for the enzyme is believed to be ubiquinone. The sequence is that of NADH-ubiquinone oxidoreductase chain 1 (MT-ND1) from Choloepus didactylus (Southern two-toed sloth).